Here is a 183-residue protein sequence, read N- to C-terminus: Efficient mitochondria targeting-associated protein 19 (183 aa).

Residues 1–25 lie on the Cytoplasmic side of the membrane; it reads MKVVSLRRIYSSEIYKLPTTRLHMD. Residues 24-156 enclose the EXPERA domain; it reads MDTLYYYYFV…PYLAIPLWMA (133 aa). A helical membrane pass occupies residues 26-46; that stretch reads TLYYYYFVSHLAAALFVDLPI. Residues 47-81 are Lumenal-facing; sequence TEWLGGSLSCLSGLRRFYLSTYEDPILLIPAPWKT. Residues 82-102 traverse the membrane as a helical segment; it reads ALFSSELFFQVPFFIWVSLRL. The Cytoplasmic segment spans residues 103-110; it reads RKKARDPV. The chain crosses the membrane as a helical span at residues 111–131; that stretch reads LWVAILIYGVHAFTTTWCCMF. The Lumenal portion of the chain corresponds to 132-138; sequence ELFAEKK. A helical transmembrane segment spans residues 139 to 159; it reads WMIMSFYFPYLAIPLWMAIDM. Residues 160–183 are Cytoplasmic-facing; sequence GGRLVKSCHAAKSGPSSTITSKSD.

This sequence belongs to the TMEM97/sigma-2 receptor family.

Its subcellular location is the endoplasmic reticulum membrane. Part of an import route for newly synthesized mitochondrial proteins termed the ER-SURF pathway (ER surface-mediated protein targeting), which retrieves mitochondrial precursor proteins from the ER surface and reroutes them to mitochondria for efficient mitochondrial import. Acts as a quality control factor in the ER, promoting the proteolytic degradation of nonproductive and extramitochondrial precursor proteins in the ER membrane thus removing them from the ER surface. The chain is Efficient mitochondria targeting-associated protein 19 (ema19) from Schizosaccharomyces pombe (strain 972 / ATCC 24843) (Fission yeast).